We begin with the raw amino-acid sequence, 215 residues long: Pyrrolidone-carboxylate peptidase (215 aa).

Catalysis depends on residues E80, C143, and H167.

It belongs to the peptidase C15 family. Homotetramer.

It is found in the cytoplasm. The enzyme catalyses Release of an N-terminal pyroglutamyl group from a polypeptide, the second amino acid generally not being Pro.. In terms of biological role, removes 5-oxoproline from various penultimate amino acid residues except L-proline. In Yersinia pseudotuberculosis serotype O:1b (strain IP 31758), this protein is Pyrrolidone-carboxylate peptidase.